Here is a 439-residue protein sequence, read N- to C-terminus: GTPase Der (439 aa).

EngA-type G domains are found at residues 4 to 169 (AMVA…PEND) and 177 to 352 (IKIA…EEYN). GTP is bound by residues 10–17 (GRPNVGKS), 57–61 (DTGGL), 120–123 (NKVD), 183–190 (GRPNVGKS), 230–234 (DTAGI), and 295–298 (NKWD). The 85-residue stretch at 353-437 (KRITTGLLNN…PIVISTKKRG (85 aa)) folds into the KH-like domain.

It belongs to the TRAFAC class TrmE-Era-EngA-EngB-Septin-like GTPase superfamily. EngA (Der) GTPase family. In terms of assembly, associates with the 50S ribosomal subunit.

GTPase that plays an essential role in the late steps of ribosome biogenesis. The sequence is that of GTPase Der from Caldanaerobacter subterraneus subsp. tengcongensis (strain DSM 15242 / JCM 11007 / NBRC 100824 / MB4) (Thermoanaerobacter tengcongensis).